The following is a 245-amino-acid chain: tRNA pseudouridine synthase A (245 aa).

D52 (nucleophile) is an active-site residue. Substrate is bound at residue Y111.

This sequence belongs to the tRNA pseudouridine synthase TruA family. Homodimer.

It catalyses the reaction uridine(38/39/40) in tRNA = pseudouridine(38/39/40) in tRNA. In terms of biological role, formation of pseudouridine at positions 38, 39 and 40 in the anticodon stem and loop of transfer RNAs. This chain is tRNA pseudouridine synthase A, found in Ehrlichia chaffeensis (strain ATCC CRL-10679 / Arkansas).